We begin with the raw amino-acid sequence, 475 residues long: Methylenetetrahydrofolate--tRNA-(uracil-5-)-methyltransferase TrmFO (475 aa).

Gly-9–Gly-14 lines the FAD pocket. A disordered region spans residues Ala-427–Arg-447.

It belongs to the MnmG family. TrmFO subfamily. FAD is required as a cofactor.

Its subcellular location is the cytoplasm. The catalysed reaction is uridine(54) in tRNA + (6R)-5,10-methylene-5,6,7,8-tetrahydrofolate + NADH + H(+) = 5-methyluridine(54) in tRNA + (6S)-5,6,7,8-tetrahydrofolate + NAD(+). It catalyses the reaction uridine(54) in tRNA + (6R)-5,10-methylene-5,6,7,8-tetrahydrofolate + NADPH + H(+) = 5-methyluridine(54) in tRNA + (6S)-5,6,7,8-tetrahydrofolate + NADP(+). Functionally, catalyzes the folate-dependent formation of 5-methyl-uridine at position 54 (M-5-U54) in all tRNAs. This Methylobacterium radiotolerans (strain ATCC 27329 / DSM 1819 / JCM 2831 / NBRC 15690 / NCIMB 10815 / 0-1) protein is Methylenetetrahydrofolate--tRNA-(uracil-5-)-methyltransferase TrmFO.